A 215-amino-acid polypeptide reads, in one-letter code: FGFR1 oncogene partner 2 homolog (215 aa).

2 coiled-coil regions span residues 5–104 (IEKA…MSKY) and 161–185 (KEQE…ITRE). The segment at 194–215 (DASESTSLSALVTNSDLSLRKN) is disordered. Residues 197-215 (ESTSLSALVTNSDLSLRKN) show a composition bias toward polar residues.

Belongs to the SIKE family.

It is found in the cytoplasm. May be involved in wound healing pathway. This chain is FGFR1 oncogene partner 2 homolog (FGFR1OP2), found in Pongo abelii (Sumatran orangutan).